Consider the following 78-residue polypeptide: Metallothionein-like protein type 2 (78 aa).

The protein belongs to the metallothionein superfamily. Type 15 family.

Its function is as follows. Metallothioneins have a high content of cysteine residues that bind various heavy metals. The polypeptide is Metallothionein-like protein type 2 (Musa acuminata (Banana)).